Here is a 516-residue protein sequence, read N- to C-terminus: Protein psiC (516 aa).

Positions 1–19 (MKILILSFFLILGINLVFC) are cleaved as a signal peptide. Positions 109–249 (ESKDEPGIYV…YDACGVCLGK (141 aa)) constitute a PA14 domain. 7 N-linked (GlcNAc...) asparagine glycosylation sites follow: N134, N234, N250, N284, N333, N357, and N367. Residues 418–427 (DIIIDSSSDI) are compositionally biased toward low complexity. The disordered stretch occupies residues 418–465 (DIIIDSSSDIPIPTLSPSPQPSRFPTDTPTNTPMPPTRPPTPTEDPKI). Over residues 449–460 (TPMPPTRPPTPT) the composition is skewed to pro residues.

The protein belongs to the prespore-cell-inducing factor family.

It is found in the secreted. The sequence is that of Protein psiC (psiC) from Dictyostelium discoideum (Social amoeba).